Consider the following 240-residue polypeptide: Protein unc-119 homolog A (240 aa).

The span at 1–12 shows a compositional bias: gly residues; it reads MKVKKGGGGAGT. Residues 1–61 are disordered; sequence MKVKKGGGGA…GPLQRKQRIG (61 aa). A compositionally biased stretch (low complexity) spans 13 to 23; it reads GAEPASGAPGP. A phosphoserine; by CK2 mark is found at Ser-37, Ser-39, and Ser-41. Position 131 (Tyr-131) interacts with tetradecanoate.

Belongs to the PDE6D/unc-119 family. In terms of assembly, interacts with CABP4; in the absence of calcium. May interact with GTP-bound ARL1. Interacts with ARL2 and ARL3 (GTP-bound forms); this promotes the release of myristoylated cargo proteins. Found in a complex with ARL3, RP2 and UNC119; RP2 induces hydrolysis of GTP ARL3 in the complex, leading to the release of UNC119. Interacts with NPHP3 (when myristoylated). Interacts with CYS1 (when myristoylated). Interacts with MACIR; interaction only takes place when UNC119 is not liganded with myristoylated proteins. Interacts with LCK; this interaction plays a crucial role in activation of LCK. Interacts with FYN. Interacts with RAB11A; in a cell cycle-dependent manner. Interacts with LYN (via SH2 and SH3 domains); leading to LYN activation. Interacts with DNM1; leading to a decrease of DNM1 GTPase activity. Found in a complex with ABL1, ABL2, CRK and UNC119; leading to the inhibition of CRK phosphorylation by ABL kinases. Interacts with CD44. Interacts with KLHL18 (via kelch repeats). Interacts with PPP3CA, PPP3CB and PPP3CC. Interacts with USP48; this interaction promotes UNC119 stability. In terms of processing, phosphorylation suppresses its interaction with KLHL18 and down-regulates its KLHL18-mediated degradation. Phosphorylated more under light conditions than dark conditions. Dephosphorylated by calcineurin.

It is found in the cytoplasm. The protein localises to the cytoskeleton. It localises to the microtubule organizing center. Its subcellular location is the centrosome. The protein resides in the spindle. It is found in the spindle pole. Involved in synaptic functions in photoreceptor cells, the signal transduction in immune cells as a Src family kinase activator, endosome recycling, the uptake of bacteria and endocytosis, protein trafficking in sensory neurons and as lipid-binding chaperone with specificity for a diverse subset of myristoylated proteins. Specifically binds the myristoyl moiety of a subset of N-terminally myristoylated proteins and is required for their localization. Binds myristoylated GNAT1 and is required for G-protein localization and trafficking in sensory neurons. Probably plays a role in trafficking proteins in photoreceptor cells. Plays important roles in mediating Src family kinase signals for the completion of cytokinesis via RAB11A. This is Protein unc-119 homolog A (UNC119) from Canis lupus familiaris (Dog).